The chain runs to 31 residues: MSDIN-like toxin proprotein 8 (31 aa).

A propeptide spanning residues 1–10 (MSDINTARLP) is cleaved from the precursor. Residues 11–18 (CIGFLGIP) constitute a cross-link (cyclopeptide (Cys-Pro)). A propeptide spanning residues 19–31 (SVGDDIEMVLRHG) is cleaved from the precursor.

This sequence belongs to the MSDIN fungal toxin family. Processed by the macrocyclase-peptidase enzyme POPB to yield a toxic cyclic octapeptide. POPB first removes 10 residues from the N-terminus. Conformational trapping of the remaining peptide forces the enzyme to release this intermediate rather than proceed to macrocyclization. The enzyme rebinds the remaining peptide in a different conformation and catalyzes macrocyclization of the N-terminal 8 residues.

Its function is as follows. Probable toxin that belongs to the MSDIN-like toxin family responsible for a large number of food poisoning cases and deaths. The chain is MSDIN-like toxin proprotein 8 from Amanita bisporigera (Destroying angel).